Consider the following 623-residue polypeptide: Sphingomyelinase C 2 (623 aa).

The signal sequence occupies residues 1–25 (MINKITKPKLLIGYYLLLFSLIRCL). Low complexity-rich tracts occupy residues 51-61 (VNSVSINNDPA) and 67-80 (NPAS…NAVP). The interval 51–121 (VNSVSINNDP…DPNPANLASA (71 aa)) is disordered. The segment covering 89–102 (NPVNPASANSNQVN) has biased composition (polar residues). Residues 110 to 121 (PADPNPANLASA) are compositionally biased toward low complexity.

Its subcellular location is the secreted. The enzyme catalyses a sphingomyelin + H2O = phosphocholine + an N-acylsphing-4-enine + H(+). The protein is Sphingomyelinase C 2 (sph2) of Leptospira interrogans serogroup Icterohaemorrhagiae serovar Lai (strain 56601).